We begin with the raw amino-acid sequence, 133 residues long: Small ribosomal subunit protein uS8 (133 aa).

The protein belongs to the universal ribosomal protein uS8 family. In terms of assembly, part of the 30S ribosomal subunit. Contacts proteins S5 and S12.

Its function is as follows. One of the primary rRNA binding proteins, it binds directly to 16S rRNA central domain where it helps coordinate assembly of the platform of the 30S subunit. The protein is Small ribosomal subunit protein uS8 of Trichodesmium erythraeum (strain IMS101).